The chain runs to 383 residues: MGAGGRMSVPPPPKKLESEVLKRVPHSKPPFTLGQLKKAIPPHCFQRSVLRSFSYVVYDLTVAFIFYYIATNYFHLLPQPLSYVAWPIYWALQGCVLTGVWVIAHECGHHAFSDYQLLDDIVGLVLHSCLLVPYFSWKHSHRRHHSNTASLERDEVFVPKKKSSIRWFSKYLNNPPGRLFTLTITLTLGWPLYLAFNVSGRPYDRFACHYDPYGPIYTDRERTEIYISDAGVLAVTFGLYRLAAAKGLAWVICVYGVPLLIVNAFLVMITYLQHTHPSIPHYDSSEWDWLRGALATVDRDYGILNKVFHNITDTHVAHHLFSTMPHYHAMEATKAIKPILGEYYQFDGTPFYKAMWREAKECIYVEADDGDESKGVYWYNKKF.

Helical transmembrane passes span 56–76 (VVYDLTVAFIFYYIATNYFHL) and 84–104 (VAWPIYWALQGCVLTGVWVIA). A Histidine box-1 motif is present at residues 105-109 (HECGH). A helical membrane pass occupies residues 117-137 (LLDDIVGLVLHSCLLVPYFSW). The short motif at 141 to 145 (HRRHH) is the Histidine box-2 element. 3 consecutive transmembrane segments (helical) span residues 179–199 (LFTLTITLTLGWPLYLAFNVS), 225–245 (IYISDAGVLAVTFGLYRLAAA), and 249–269 (AWVICVYGVPLLIVNAFLVMI). Positions 315–319 (HVAHH) match the Histidine box-3 motif.

Belongs to the fatty acid desaturase type 1 family. In terms of tissue distribution, expressed in leaves and seeds.

It localises to the endoplasmic reticulum membrane. The catalysed reaction is (9Z)-octadecenoyl-CoA + 2 Fe(II)-[cytochrome b5] + O2 + 2 H(+) = (9Z,12Z)-octadecadienoyl-CoA + 2 Fe(III)-[cytochrome b5] + 2 H2O. The enzyme catalyses (9Z)-hexadecenoyl-CoA + 2 Fe(II)-[cytochrome b5] + O2 + 2 H(+) = (9Z,12Z)-hexadecadienoyl-CoA + 2 Fe(III)-[cytochrome b5] + 2 H2O. It functions in the pathway lipid metabolism; polyunsaturated fatty acid biosynthesis. Catalyzes the desaturation of oleic acid (18:1(9Z)) to linoleic acid (18:2(9Z,12Z)). The sequence is that of Delta(12)-fatty-acid desaturase FAD2 from Vernicia fordii (Tung).